The following is a 957-amino-acid chain: Glycine dehydrogenase (decarboxylating) (957 aa).

Lys-708 is subject to N6-(pyridoxal phosphate)lysine.

Belongs to the GcvP family. The glycine cleavage system is composed of four proteins: P, T, L and H. Requires pyridoxal 5'-phosphate as cofactor.

It catalyses the reaction N(6)-[(R)-lipoyl]-L-lysyl-[glycine-cleavage complex H protein] + glycine + H(+) = N(6)-[(R)-S(8)-aminomethyldihydrolipoyl]-L-lysyl-[glycine-cleavage complex H protein] + CO2. In terms of biological role, the glycine cleavage system catalyzes the degradation of glycine. The P protein binds the alpha-amino group of glycine through its pyridoxal phosphate cofactor; CO(2) is released and the remaining methylamine moiety is then transferred to the lipoamide cofactor of the H protein. This chain is Glycine dehydrogenase (decarboxylating), found in Klebsiella pneumoniae (strain 342).